The chain runs to 507 residues: Glucose-6-phosphate isomerase (507 aa).

The Proton donor role is filled by Glu-338. Residues His-369 and Lys-479 contribute to the active site.

This sequence belongs to the GPI family.

It localises to the cytoplasm. The catalysed reaction is alpha-D-glucose 6-phosphate = beta-D-fructose 6-phosphate. The protein operates within carbohydrate biosynthesis; gluconeogenesis. It functions in the pathway carbohydrate degradation; glycolysis; D-glyceraldehyde 3-phosphate and glycerone phosphate from D-glucose: step 2/4. Its function is as follows. Provides a gateway for fructose into the Entner-Doudouroff pathway. Functionally, catalyzes the reversible isomerization of glucose-6-phosphate to fructose-6-phosphate. The sequence is that of Glucose-6-phosphate isomerase from Zymomonas mobilis subsp. mobilis (strain ATCC 31821 / ZM4 / CP4).